Here is a 977-residue protein sequence, read N- to C-terminus: Fc receptor-like protein 5 (977 aa).

The signal sequence occupies residues 1-15 (MLLWVILLVLAPVSG). At 16-851 (QFARTPRPII…ANRSGPFATG (836 aa)) the chain is on the extracellular side. 8 consecutive Ig-like C2-type domains span residues 23–101 (PIIF…LDFS), 188–271 (PFTR…SVIS), 287–374 (PVLT…LSVT), 380–463 (PVLN…KAVS), 473–556 (PVLT…EVVS), 566–651 (PILT…ISLS), 659–744 (PILT…VTLK), and 752–834 (PVLT…ETVT). Disulfide bonds link cysteine 44/cysteine 85, cysteine 211/cysteine 260, and cysteine 308/cysteine 355. Asparagine 383 is a glycosylation site (N-linked (GlcNAc...) asparagine). Intrachain disulfides connect cysteine 401–cysteine 448, cysteine 494–cysteine 541, cysteine 587–cysteine 634, cysteine 680–cysteine 727, and cysteine 773–cysteine 819. The helical transmembrane segment at 852–872 (VAGGLLSIAGLAAGALLLYCW) threads the bilayer. Residues 873 to 977 (LSRKAGRKPA…LFLASSAPHR (105 aa)) are Cytoplasmic-facing. The tract at residues 879-898 (RKPASDPARSPSDSDSQEPT) is disordered. Over residues 883–892 (SDPARSPSDS) the composition is skewed to low complexity. 4 consecutive short sequence motifs (ITIM motif) follow at residues 897–902 (PTYHNV), 910–915 (PVYTNA), 922–927 (VVYSEV), and 952–957 (IIYSEV).

As to quaternary structure, interacts with CR2. Interacts with CD19. As to expression, expressed in marginal zone B-cells, immunoblasts, tonsillar germinal center centrocytes and in the intraepithelial and interfollicular regions of the tonsil. Expressed in many lymphoma cell lines and on hairy cell leukemia cells. Isoform 1, isoform 3, isoform 4 and isoform 5 are detected in lymph node, spleen, bone marrow, and small intestine with preponderance of isoform 3. Expressed in mature and memory B-cells and down-regulated in germinal center cells (at protein level).

It is found in the cell membrane. Plays an important role in B-cell response to antigen that acts both as a negative or positive coreceptor. Inhibits B-cell receptor (BCR) signaling in the absence of CR2 stimulation but engagement with CR2 and the BCR lead to a superior calcium response compared to CR2 and BCR costimulation. May be involved in B-cell development and differentiation in peripheral lymphoid organs and may be useful markers of B-cell stages. May have an immunoregulatory role in marginal zone B-cells. May play a role in fertilization. The polypeptide is Fc receptor-like protein 5 (FCRL5) (Homo sapiens (Human)).